The chain runs to 134 residues: Small ribosomal subunit protein uS8c (134 aa).

In terms of assembly, component of the chloroplast small ribosomal subunit (SSU). Mature 70S chloroplast ribosomes of higher plants consist of a small (30S) and a large (50S) subunit. The 30S small subunit contains 1 molecule of ribosomal RNA (16S rRNA) and 24 different proteins. The 50S large subunit contains 3 rRNA molecules (23S, 5S and 4.5S rRNA) and 33 different proteins.

It localises to the plastid. The protein localises to the chloroplast. Its function is as follows. Component of the chloroplast ribosome (chloro-ribosome), a dedicated translation machinery responsible for the synthesis of chloroplast genome-encoded proteins, including proteins of the transcription and translation machinery and components of the photosynthetic apparatus. The sequence is that of Small ribosomal subunit protein uS8c (rps8) from Spinacia oleracea (Spinach).